Reading from the N-terminus, the 135-residue chain is Galectin-1 (135 aa).

The residue at position 2 (Ala2) is an N-acetylalanine. A Galectin domain is found at 4-135 (GLVASNLNLK…DFKIKCVAFE (132 aa)). N6-acetyllysine is present on residues Lys13, Lys19, and Lys29. Ser30 is modified (phosphoserine). Residues 45-49 (HFNPR), His53, Asn62, and 69-72 (WGTE) contribute to the a beta-D-galactoside site. The residue at position 108 (Lys108) is an N6-acetyllysine; alternate. An N6-succinyllysine; alternate modification is found at Lys108. Lys128 carries the N6-acetyllysine modification.

As to quaternary structure, homodimer. Binds LGALS3BP. Interacts with CD2, CD3, CD4, CD6, CD7, CD43, ALCAM and CD45. Interacts with laminin (via poly-N-acetyllactosamine). Interacts with SUSD2. Interacts with cargo receptor TMED10; the interaction mediates the translocation from the cytoplasm into the ERGIC (endoplasmic reticulum-Golgi intermediate compartment) and thereby secretion. Interacts with CD69.

It is found in the secreted. Its subcellular location is the extracellular space. The protein resides in the extracellular matrix. The protein localises to the cytoplasm. Lectin that binds beta-galactoside and a wide array of complex carbohydrates. Plays a role in regulating apoptosis, cell proliferation and cell differentiation. Inhibits CD45 protein phosphatase activity and therefore the dephosphorylation of Lyn kinase. Strong inducer of T-cell apoptosis. Plays a negative role in Th17 cell differentiation via activation of the receptor CD69. This chain is Galectin-1 (Lgals1), found in Mus musculus (Mouse).